The primary structure comprises 1724 residues: MAFFRNYSNDTVSHNVLDENEERQNAATFQSSPLNEDVDGTYSERGFDMNMDVQYQSDPEPGCSIRQPNETAVDNVADPVDSHYQSSTKRLGVTGRWGSTFWKDCQPMGQREGSDPAKDSQSGYKEAYHSEDNHSNDRSEKLDSENENDNENEEEDNEMNKHQSGQADVPADEMLSDEYYEQDEDNQSDHVHYKGYSNPTNSRSLPKAGSAVHSNSRTSRAIHKNIHYSDSNHDHNGDADMDYEEEEDEDDPEDADFEPYDAADDGGASKKHGQGWDVSDEDPESDEEIDLSDYEDDYGTKKPKVRQQSKGFRKSSAGLERKSFHVSSRQKRKTSYQDDDSEEDSENDNDEGFRSLARRGTTLRQNNGRSTNTIGQSSEVRSSTRSVRKVSYVESEDSEDIDDGKNRKNQKDDIEEEDADVIEKVLWHQLKGMGEDVQTNNKSTVPVLVSQLFDTEPDWNEMEFLIKWKGQSHLHCQWKTLSDLQNLSGFKKVLNYTKKVTEEIRYRTALSREEIEVNDVSKEMDLDIIKQNSQVERIIADRISKDGLGDVVPEYLVKWQGLSYAEATWEKDVDIAFAQVAIDEYKAREVSIAVQGKMVEQQRTKGKASLRKLDEQPEWLIGGTLRDYQLEGLNFLVNSWLNDTNVILADEMGLGKTVQSVSMLGFLQNTQQIPGPFLVVVPLSTLANWAKEFRKWLPGMNIIVYVGTRASREVCQQYEFYNEKKVGRPIKFNALLTTYEVVLKDKAVLSKIKWIYLMVDEAHRLKNSEAQLYTALLEFSTKNKLLITGTPLQNSVEELWALLHFLDPGKFKNKDEFVENYKNLSSFNESELANLHLELRPHILRRVIKDVEKSLPPKIERILRVEMSPLQKQYYKWILERNFHDLNKGVRGNQVSLLNIVVELKKCCNHPFLFESADHGYGGDINDNSKLDKIILSSGKLVILDKLLVRLRETKHRVLIFSQMVRMLDILAEYLSLRGFQFQRLDGSTKAELRQQAMDHFNAPASDDFCFLLSTRAGGLGINLATADTVVIFDSDWNPQNDLQAMSRAHRIGQQEVVNIYRFVTSKSVEEEILERAKRKMVLDHLVIQKLNAEGRLEKRETKKGSNFDKNELSAILRFGAEELFKEDKNDEESKKRLLSMDIDEILERAEQVEEKHTDETEHELLGAFKVANFCNAEDDGSFWSRWIKPDSVVTAEEALAPRAARNTKSYVDPSHPDRTSKRKKKGSEPPEHTERSQKRRKTEYFVPSTPLLEGTSAQVRGWSYGNLPKRDAQRFYRTVMKFGNHNQMACIAEEVGGVVEAAPEEAQVELFDALIDGCKESVETGNFEPKGPVLDFFGVPVKANELLKRVQGLQLLSKRISRYNDPISQFRVLSYLKPSNWSKGCGWNQIDDARLLLGILYHGFGNWEKIRLDESLGLTKKIAPVELQHHETFLPRAPNLKERATALLEMELAAAGGKNTNAKASRKNSKKVKDNLINQFKAPARDRRGKSGPANVSLLSTKDGPRKTQKAEPLVKEEGEMSDDGEVYEQFKEQKWMEWCEDVLADEIKTLGRLQRLQTTSADLPKEKVLFKIRRYLEILGRRIDAIVLEHEEDLYKQDRMTMRLWNYVSTFSNLSGDRLNQIYSKLKQEKEEEEGVGPSHLNGSRNFQRQQKFKTAGNSQGSQQVHKGIDTAKFEAWKRRRRTENDVQTERPTITNSNSLGILGPGPLDRSHRARQTGFPPR.

Disordered stretches follow at residues 24 to 88 (QNAA…QSST) and 104 to 415 (DCQP…DDIE). The segment covering 25 to 34 (NAATFQSSPL) has biased composition (polar residues). A compositionally biased stretch (basic and acidic residues) spans 126 to 144 (EAYHSEDNHSNDRSEKLDS). The stretch at 138–164 (RSEKLDSENENDNENEEEDNEMNKHQS) forms a coiled coil. 4 stretches are compositionally biased toward acidic residues: residues 145 to 157 (ENEN…EEDN), 170 to 186 (PADE…DEDN), 239 to 264 (ADMD…DAAD), and 278 to 297 (VSDE…YEDD). Residues 301-313 (KKPKVRQQSKGFR) show a composition bias toward basic residues. Residues 320–327 (ERKSFHVS) carry the Nuclear localization signal 1 motif. Positions 337–350 (QDDDSEEDSENDND) are enriched in acidic residues. Residues 362–376 (TLRQNNGRSTNTIGQ) show a composition bias toward polar residues. Over residues 403–412 (DGKNRKNQKD) the composition is skewed to basic and acidic residues. A Chromo 1 domain is found at 420–499 (DVIEKVLWHQ…FKKVLNYTKK (80 aa)). Residues 505–525 (RYRTALSREEIEVNDVSKEMD) adopt a coiled-coil conformation. The Chromo 2 domain maps to 533 to 597 (SQVERIIADR…REVSIAVQGK (65 aa)). Positions 637–809 (VNSWLNDTNV…WALLHFLDPG (173 aa)) constitute a Helicase ATP-binding domain. Residue 650–657 (DEMGLGKT) participates in ATP binding. Positions 760–763 (DEAH) match the DEAH box motif. Positions 943–1094 (ILDKLLVRLR…HLVIQKLNAE (152 aa)) constitute a Helicase C-terminal domain. Residues 1126–1163 (KEDKNDEESKKRLLSMDIDEILERAEQVEEKHTDETEH) are a coiled coil. The disordered stretch occupies residues 1199–1245 (ALAPRAARNTKSYVDPSHPDRTSKRKKKGSEPPEHTERSQKRRKTEY). 2 consecutive short sequence motifs (nuclear localization signal) follow at residues 1224 to 1231 (KKKGSEPP) and 1348 to 1355 (LKRVQGLQ). The span at 1227–1237 (GSEPPEHTERS) shows a compositional bias: basic and acidic residues. 2 disordered regions span residues 1480–1524 (QFKA…EMSD) and 1654–1724 (KFKT…FPPR). The segment covering 1504 to 1520 (DGPRKTQKAEPLVKEEG) has biased composition (basic and acidic residues). The segment covering 1658–1667 (AGNSQGSQQV) has biased composition (polar residues). A compositionally biased stretch (basic and acidic residues) spans 1669-1691 (KGIDTAKFEAWKRRRRTENDVQT). Residues 1692–1702 (ERPTITNSNSL) show a composition bias toward polar residues.

It belongs to the SNF2/RAD54 helicase family.

The protein resides in the nucleus. Its function is as follows. DNA-binding helicase that specifically binds to the promoter of target genes, leading to chromatin remodeling, possibly by promoting deposition of histone H3.3. Probable chromatin remodeling factor. The chain is Protein CHROMATIN REMODELING 5 from Arabidopsis thaliana (Mouse-ear cress).